A 99-amino-acid chain; its full sequence is NADH-quinone oxidoreductase subunit K (99 aa).

Helical transmembrane passes span 3 to 23, 28 to 48, and 59 to 79; these read PDNYLYLAALIFTIGAAGVML, IVVFMSVELMLNAANLAFVTF, and VIAFFTMVVAATEVVVGLGII.

This sequence belongs to the complex I subunit 4L family. In terms of assembly, NDH-1 is composed of 14 different subunits. Subunits NuoA, H, J, K, L, M, N constitute the membrane sector of the complex.

The protein localises to the cell membrane. It carries out the reaction a quinone + NADH + 5 H(+)(in) = a quinol + NAD(+) + 4 H(+)(out). In terms of biological role, NDH-1 shuttles electrons from NADH, via FMN and iron-sulfur (Fe-S) centers, to quinones in the respiratory chain. The immediate electron acceptor for the enzyme in this species is believed to be a menaquinone. Couples the redox reaction to proton translocation (for every two electrons transferred, four hydrogen ions are translocated across the cytoplasmic membrane), and thus conserves the redox energy in a proton gradient. This is NADH-quinone oxidoreductase subunit K from Mycobacteroides abscessus (strain ATCC 19977 / DSM 44196 / CCUG 20993 / CIP 104536 / JCM 13569 / NCTC 13031 / TMC 1543 / L948) (Mycobacterium abscessus).